The sequence spans 261 residues: Cytochrome c oxidase subunit 3 (261 aa).

Residues 1–15 are Mitochondrial matrix-facing; it reads MTHQTHAYHMVNPSP. Residues 16-34 form a helical membrane-spanning segment; it reads WPLTGALSALLMTSGLTMW. Residues 35–40 lie on the Mitochondrial intermembrane side of the membrane; the sequence is FHYNST. A helical transmembrane segment spans residues 41 to 66; the sequence is ILLMLGLTTNMLTMYQWWRDIIREST. Topologically, residues 67 to 72 are mitochondrial matrix; sequence FQGHHT. The chain crosses the membrane as a helical span at residues 73–105; the sequence is PTVQKGLRYGMILFIISEVLFFTGFFWAFYHSS. Residues 106–128 lie on the Mitochondrial intermembrane side of the membrane; it reads LAPTPELGGCWPPTGIHPLNPLE. A helical membrane pass occupies residues 129–152; sequence VPLLNTSVLLASGVSITWAHHSLM. Topologically, residues 153–155 are mitochondrial matrix; sequence EGD. The chain crosses the membrane as a helical span at residues 156-183; it reads RNHMLQALFITIALGIYFTLLQASEYYE. Residues 184-190 lie on the Mitochondrial intermembrane side of the membrane; that stretch reads APFTISD. A helical transmembrane segment spans residues 191 to 223; that stretch reads GVYGSTFFVATGFHGLHVIIGSTFLIVCFFRQL. The Mitochondrial matrix portion of the chain corresponds to 224–232; it reads KFHFTSSHH. The chain crosses the membrane as a helical span at residues 233 to 256; the sequence is FGFEAAAWYWHFVDVVWLFLYVSI. Residues 257–261 are Mitochondrial intermembrane-facing; it reads YWWGS.

This sequence belongs to the cytochrome c oxidase subunit 3 family. As to quaternary structure, component of the cytochrome c oxidase (complex IV, CIV), a multisubunit enzyme composed of 14 subunits. The complex is composed of a catalytic core of 3 subunits MT-CO1, MT-CO2 and MT-CO3, encoded in the mitochondrial DNA, and 11 supernumerary subunits COX4I, COX5A, COX5B, COX6A, COX6B, COX6C, COX7A, COX7B, COX7C, COX8 and NDUFA4, which are encoded in the nuclear genome. The complex exists as a monomer or a dimer and forms supercomplexes (SCs) in the inner mitochondrial membrane with NADH-ubiquinone oxidoreductase (complex I, CI) and ubiquinol-cytochrome c oxidoreductase (cytochrome b-c1 complex, complex III, CIII), resulting in different assemblies (supercomplex SCI(1)III(2)IV(1) and megacomplex MCI(2)III(2)IV(2)).

It is found in the mitochondrion inner membrane. It carries out the reaction 4 Fe(II)-[cytochrome c] + O2 + 8 H(+)(in) = 4 Fe(III)-[cytochrome c] + 2 H2O + 4 H(+)(out). Component of the cytochrome c oxidase, the last enzyme in the mitochondrial electron transport chain which drives oxidative phosphorylation. The respiratory chain contains 3 multisubunit complexes succinate dehydrogenase (complex II, CII), ubiquinol-cytochrome c oxidoreductase (cytochrome b-c1 complex, complex III, CIII) and cytochrome c oxidase (complex IV, CIV), that cooperate to transfer electrons derived from NADH and succinate to molecular oxygen, creating an electrochemical gradient over the inner membrane that drives transmembrane transport and the ATP synthase. Cytochrome c oxidase is the component of the respiratory chain that catalyzes the reduction of oxygen to water. Electrons originating from reduced cytochrome c in the intermembrane space (IMS) are transferred via the dinuclear copper A center (CU(A)) of subunit 2 and heme A of subunit 1 to the active site in subunit 1, a binuclear center (BNC) formed by heme A3 and copper B (CU(B)). The BNC reduces molecular oxygen to 2 water molecules using 4 electrons from cytochrome c in the IMS and 4 protons from the mitochondrial matrix. In Tragelaphus imberbis (Lesser kudu), this protein is Cytochrome c oxidase subunit 3 (MT-CO3).